Consider the following 400-residue polypeptide: NADH-quinone oxidoreductase subunit D (400 aa).

Belongs to the complex I 49 kDa subunit family. In terms of assembly, NDH-1 is composed of 14 different subunits. Subunits NuoB, C, D, E, F, and G constitute the peripheral sector of the complex.

Its subcellular location is the cell inner membrane. It carries out the reaction a quinone + NADH + 5 H(+)(in) = a quinol + NAD(+) + 4 H(+)(out). In terms of biological role, NDH-1 shuttles electrons from NADH, via FMN and iron-sulfur (Fe-S) centers, to quinones in the respiratory chain. The immediate electron acceptor for the enzyme in this species is believed to be a menaquinone. Couples the redox reaction to proton translocation (for every two electrons transferred, four hydrogen ions are translocated across the cytoplasmic membrane), and thus conserves the redox energy in a proton gradient. The protein is NADH-quinone oxidoreductase subunit D of Chlorobium chlorochromatii (strain CaD3).